The primary structure comprises 41 residues: trp operon leader peptide (41 aa).

Functionally, this protein is involved in control of the biosynthesis of tryptophan. This is trp operon leader peptide (trpL) from Vibrio parahaemolyticus serotype O3:K6 (strain RIMD 2210633).